Consider the following 508-residue polypeptide: tRNA-2-methylthio-N(6)-dimethylallyladenosine synthase (508 aa).

Positions 1–21 are disordered; sequence MNEEQRKASGQVSSSDKKSEK. Residues 65–183 form the MTTase N-terminal domain; that stretch reads RKFYIRTYGC…LPELLSECYL (119 aa). [4Fe-4S] cluster contacts are provided by Cys74, Cys110, Cys144, Cys220, Cys224, and Cys227. The Radical SAM core domain occupies 206 to 436; the sequence is RQGKIKGWVN…NALVNEISAK (231 aa). Residues 439 to 502 enclose the TRAM domain; sequence KEYEGQTVEV…TWSLDGEMVG (64 aa).

Belongs to the methylthiotransferase family. MiaB subfamily. Monomer. It depends on [4Fe-4S] cluster as a cofactor.

Its subcellular location is the cytoplasm. The enzyme catalyses N(6)-dimethylallyladenosine(37) in tRNA + (sulfur carrier)-SH + AH2 + 2 S-adenosyl-L-methionine = 2-methylsulfanyl-N(6)-dimethylallyladenosine(37) in tRNA + (sulfur carrier)-H + 5'-deoxyadenosine + L-methionine + A + S-adenosyl-L-homocysteine + 2 H(+). In terms of biological role, catalyzes the methylthiolation of N6-(dimethylallyl)adenosine (i(6)A), leading to the formation of 2-methylthio-N6-(dimethylallyl)adenosine (ms(2)i(6)A) at position 37 in tRNAs that read codons beginning with uridine. This is tRNA-2-methylthio-N(6)-dimethylallyladenosine synthase from Bacillus pumilus (strain SAFR-032).